The following is a 149-amino-acid chain: NADH-quinone oxidoreductase subunit A (149 aa).

Transmembrane regions (helical) follow at residues phenylalanine 16–phenylalanine 36, phenylalanine 68–tryptophan 88, and leucine 98–valine 118.

It belongs to the complex I subunit 3 family. In terms of assembly, NDH-1 is composed of 13 different subunits. Subunits NuoA, H, J, K, L, M, N constitute the membrane sector of the complex.

Its subcellular location is the cell inner membrane. The enzyme catalyses a quinone + NADH + 5 H(+)(in) = a quinol + NAD(+) + 4 H(+)(out). Functionally, NDH-1 shuttles electrons from NADH, via FMN and iron-sulfur (Fe-S) centers, to quinones in the respiratory chain. The immediate electron acceptor for the enzyme in this species is believed to be ubiquinone. Couples the redox reaction to proton translocation (for every two electrons transferred, four hydrogen ions are translocated across the cytoplasmic membrane), and thus conserves the redox energy in a proton gradient. This Photorhabdus laumondii subsp. laumondii (strain DSM 15139 / CIP 105565 / TT01) (Photorhabdus luminescens subsp. laumondii) protein is NADH-quinone oxidoreductase subunit A.